The chain runs to 61 residues: Photosystem II reaction center protein K (61 aa).

Positions methionine 1–alanine 24 are excised as a propeptide. Residues methionine 40–phenylalanine 60 form a helical membrane-spanning segment.

Belongs to the PsbK family. PSII is composed of 1 copy each of membrane proteins PsbA, PsbB, PsbC, PsbD, PsbE, PsbF, PsbH, PsbI, PsbJ, PsbK, PsbL, PsbM, PsbT, PsbX, PsbY, PsbZ, Psb30/Ycf12, at least 3 peripheral proteins of the oxygen-evolving complex and a large number of cofactors. It forms dimeric complexes.

Its subcellular location is the plastid. The protein resides in the chloroplast thylakoid membrane. Its function is as follows. One of the components of the core complex of photosystem II (PSII). PSII is a light-driven water:plastoquinone oxidoreductase that uses light energy to abstract electrons from H(2)O, generating O(2) and a proton gradient subsequently used for ATP formation. It consists of a core antenna complex that captures photons, and an electron transfer chain that converts photonic excitation into a charge separation. This is Photosystem II reaction center protein K from Sinapis alba (White mustard).